Reading from the N-terminus, the 305-residue chain is NAD kinase (305 aa).

Catalysis depends on D88, which acts as the Proton acceptor. NAD(+) contacts are provided by residues D88–G89, R93, N162–E163, K173, N192, T203–S208, and Q262.

This sequence belongs to the NAD kinase family. Requires a divalent metal cation as cofactor.

The protein resides in the cytoplasm. The catalysed reaction is NAD(+) + ATP = ADP + NADP(+) + H(+). Functionally, involved in the regulation of the intracellular balance of NAD and NADP, and is a key enzyme in the biosynthesis of NADP. Catalyzes specifically the phosphorylation on 2'-hydroxyl of the adenosine moiety of NAD to yield NADP. This is NAD kinase from Tropheryma whipplei (strain TW08/27) (Whipple's bacillus).